We begin with the raw amino-acid sequence, 507 residues long: Cobyric acid synthase (507 aa).

One can recognise a GATase cobBQ-type domain in the interval 273-468 (RPVIAVIAYP…LHGMFEDPAV (196 aa)). Catalysis depends on Cys354, which acts as the Nucleophile. The active site involves His460.

The protein belongs to the CobB/CobQ family. CobQ subfamily.

Its pathway is cofactor biosynthesis; adenosylcobalamin biosynthesis. In terms of biological role, catalyzes amidations at positions B, D, E, and G on adenosylcobyrinic A,C-diamide. NH(2) groups are provided by glutamine, and one molecule of ATP is hydrogenolyzed for each amidation. This Polaromonas sp. (strain JS666 / ATCC BAA-500) protein is Cobyric acid synthase.